A 288-amino-acid chain; its full sequence is CUF1-dependent copper transporter 1 (288 aa).

Asn18 carries N-linked (GlcNAc...) asparagine glycosylation. A helical transmembrane segment spans residues 42-62 (MPSSAGATVGVCIGLFILAIF). Disordered stretches follow at residues 106–125 (PVLF…YNPL) and 154–180 (RESQ…GSGV). The segment covering 158-167 (EGSSAPSYAH) has biased composition (polar residues). Low complexity predominate over residues 168–177 (SQQGQAQAQG). A helical membrane pass occupies residues 251–271 (LLMLVVMTFNIWWMISVVIGC).

The protein belongs to the copper transporter (Ctr) (TC 1.A.56) family. SLC31A subfamily. In terms of assembly, interacts with the copper acquisition factor BIM1.

It localises to the cell membrane. Functionally, high affinity copper transporter involved in Cu(+) import into the cell upon copper-limitating conditions. Functions with BIM1 and probably also FRE4 and FRE7, where FRE4 and FRE7 metalloreductases liberate the Cu(2+) bound to the BIM1 copper-binding site for subsequent import of Cu(+) into the cell by CTR1, via the reduction of BIM1-bound Cu(2+) to Cu(+) to reduce binding affinity for BIM1 but increase affinity for CTR1. The BIM1-CTR1 pathway for copper uptake plays a key role in colonization in the brain where copper amounts are low and thus in cryptococcal meningitis. In Cryptococcus neoformans var. grubii serotype A (strain H99 / ATCC 208821 / CBS 10515 / FGSC 9487) (Filobasidiella neoformans var. grubii), this protein is CUF1-dependent copper transporter 1.